A 447-amino-acid chain; its full sequence is Chordin-like protein 1 (447 aa).

Residues 1–22 (MEGIKYIASLVFFFVFLEASKT) form the signal peptide. 2 consecutive VWFC domains span residues 30-95 (TYCM…PRCP) and 108-174 (KSCE…RVCR). A glycan (N-linked (GlcNAc...) asparagine) is linked at Asn113. The Cell attachment site motif lies at 174 to 176 (RGD). A disordered region spans residues 199–219 (HSYLRSPYDPPPSRQAGGLPR). In terms of domain architecture, VWFC 3 spans 253-318 (QVCVSNGKTY…LDGKCCKVCP (66 aa)). Asn286 is a glycosylation site (N-linked (GlcNAc...) asparagine).

The protein resides in the secreted. Functionally, seems to antagonize the function of BMP4 by binding to it and preventing its interaction with receptors. Alters the fate commitment of neural stem cells from gliogenesis to neurogenesis. Contributes to neuronal differentiation of neural stem cells in the brain by preventing the adoption of a glial fate. May play a crucial role in dorsoventral axis formation. May play a role in embryonic bone formation. Plays a role during anterior segment eye development. In Rattus norvegicus (Rat), this protein is Chordin-like protein 1 (Chrdl1).